We begin with the raw amino-acid sequence, 283 residues long: Large ribosomal subunit protein uL2 (283 aa).

Disordered stretches follow at residues 37–59 (AKKKKNSGRNNQGKITVRHRGGG) and 219–283 (HKGI…RNSK). Over residues 256-269 (WGKRHMGVKTRNNK) the composition is skewed to basic residues.

It belongs to the universal ribosomal protein uL2 family. As to quaternary structure, part of the 50S ribosomal subunit. Forms a bridge to the 30S subunit in the 70S ribosome.

In terms of biological role, one of the primary rRNA binding proteins. Required for association of the 30S and 50S subunits to form the 70S ribosome, for tRNA binding and peptide bond formation. It has been suggested to have peptidyltransferase activity; this is somewhat controversial. Makes several contacts with the 16S rRNA in the 70S ribosome. The protein is Large ribosomal subunit protein uL2 of Mycoplasmoides gallisepticum (strain R(low / passage 15 / clone 2)) (Mycoplasma gallisepticum).